Reading from the N-terminus, the 736-residue chain is MPLNRTLSMSSLPGLEDWEDEFDLENTVLFEVAWEVANKVGGIYTVLQTKAKVTGDEWGDNYYLVGPYTEQGVRTQVELLEPPTPALKRTLDSMNSKGCKVYFGRWLIEGGPLVVLLDVGASAWALERWKGELWDTCNIGVPWYDREANDAVLFGFLTTWFLGEFLAQSEEKPHVVAHFHEWLAGVGLCLCRARRLPVATIFTTHATLLGRYLCAGAVDFYNNLENFNVDKEAGERQIYHRYCMERAAAHCAHVFTTVSQITAIEAQHLLKRKPDIVTPNGLNVKKFSAMHEFQNLHAQSKARIQEFVRGHFYGHLDFNLDKTLYFFIAGRYEFSNKGADVFLEALARLNYLLRVNGSEQTVVAFFIMPARTNNFNVETLKGQAVRKQLWDTANTVKEKFGRKLYESLLVGSLPDMNKMLDKEDFTMMKRAIFATQRQSFPPVCTHNMLDDSSDPILTTIRRIGLFNSSADRVKVIFHPEFLSSTSPLLPVDYEEFVRGCHLGVFPSYYEPWGYTPAECTVMGIPSVSTNLSGFGCFMEEHIADPSAYGIYILDRRFRSLDDSCSQLTSFLYSFCQQSRRQRIIQRNRTERLSDLLDWKYLGRYYMSARHMALAKAFPEYFTYEPHEADATQGYRYPRPASVPPSPSLSRHSSPHQSEDEEEPRDLPPDEDDERYDEDEEAAKDRRNIRAPEWPRRASCTSSTGSKRGSVDTAPSSSVSTPSEPLSPASSLGEERN.

Phosphoserine; by AMPK and PKA is present on Ser8. Residue Ser11 is modified to Phosphoserine. Lys39 provides a ligand contact to UDP. Positions 205 and 211 each coordinate UDP-alpha-D-glucose. Residues His291, Glu292, Gln294, His297, and Lys301 each coordinate alpha-D-glucose 6-phosphate. Position 331 (Arg331) interacts with UDP. Arg331 is a UDP-alpha-D-glucose binding site. Ser412 carries the post-translational modification Phosphoserine. His501 contacts alpha-D-glucose 6-phosphate. UDP-alpha-D-glucose-binding residues include Glu510, Trp512, and Gly513. Residue Thr515 coordinates UDP. Alpha-D-glucose 6-phosphate contacts are provided by Arg582 and Arg586. Positions 631-736 are disordered; that stretch reads TQGYRYPRPA…PASSLGEERN (106 aa). Ser641 bears the Phosphoserine; by DYRK2, GSK3-alpha, GSK3-beta and PASK mark. A phosphoserine; by GSK3-alpha and GSK3-beta mark is found at Ser645 and Ser649. At Ser652 the chain carries Phosphoserine. Ser653 is modified (phosphoserine; by GSK3-alpha and GSK3-beta). Ser657 is subject to Phosphoserine; by CK2. Positions 658–681 are enriched in acidic residues; it reads EDEEEPRDLPPDEDDERYDEDEEA. Positions 682–695 are enriched in basic and acidic residues; the sequence is AKDRRNIRAPEWPR. Ser698 bears the Phosphoserine mark. Thr700 carries the phosphothreonine modification. Position 709 is a phosphoserine (Ser709). Over residues 714–727 the composition is skewed to low complexity; sequence PSSSVSTPSEPLSP. A Phosphothreonine modification is found at Thr720. Residues Ser726 and Ser730 each carry the phosphoserine modification.

Belongs to the glycosyltransferase 3 family. Part of the GYS1-GYG1 complex, a heterooctamer composed of a tetramer of GYS1 and 2 dimers of GYG1, where each GYS1 protomer binds to one GYG1 subunit (via GYG1 C-terminus); the GYS1 tetramer may dissociate from GYG1 dimers to continue glycogen polymerization on its own. In terms of processing, phosphorylation at Ser-8 by AMPK inactivates the enzyme activity. Primed phosphorylation at Ser-657 (site 5) by CSNK2A1 and CSNK2A2 is required for inhibitory phosphorylation at Ser-641 (site 3a), Ser-645 (site 3b), Ser-649 (site 3c) and Ser-653 (site 4) by GSK3A an GSK3B. Phosphorylated at Ser-641 by PASK, leading to inactivation; phosphorylation by PASK is inhibited by glycogen. Phosphorylated at Ser-641 by DYRK2, leading to inactivation. Dephosphorylation at Ser-641 and Ser-645 by PP1 activates the enzyme.

The enzyme catalyses [(1-&gt;4)-alpha-D-glucosyl](n) + UDP-alpha-D-glucose = [(1-&gt;4)-alpha-D-glucosyl](n+1) + UDP + H(+). It participates in glycan biosynthesis; glycogen biosynthesis. Allosteric activation by glucose-6-phosphate. Phosphorylation reduces the activity towards UDP-glucose. When in the non-phosphorylated state, glycogen synthase does not require glucose-6-phosphate as an allosteric activator; when phosphorylated it does. In terms of biological role, glycogen synthase participates in the glycogen biosynthetic process along with glycogenin and glycogen branching enzyme. Extends the primer composed of a few glucose units formed by glycogenin by adding new glucose units to it. In this context, glycogen synthase transfers the glycosyl residue from UDP-Glc to the non-reducing end of alpha-1,4-glucan. This chain is Glycogen [starch] synthase, muscle (GYS1), found in Bos taurus (Bovine).